The chain runs to 117 residues: Immunoglobulin kappa variable 1-9 (117 aa).

Positions 1–22 are cleaved as a signal peptide; that stretch reads MDMRVPAQLLGLLLLWLPGARC. The tract at residues 23–45 is framework-1; sequence DIQLTQSPSFLSASVGDRVTITC. Positions 24 to 117 constitute an Ig-like domain; sequence IQLTQSPSFL…YYCQQLNSYP (94 aa). An intrachain disulfide couples Cys45 to Cys110. Positions 46 to 56 are complementarity-determining-1; that stretch reads RASQGISSYLA. A framework-2 region spans residues 57–71; the sequence is WYQQKPGKAPKLLIY. The complementarity-determining-2 stretch occupies residues 72 to 78; that stretch reads AASTLQS. Residues 79 to 110 are framework-3; sequence GVPSRFSGSGSGTEFTLTISSLQPEDFATYYC. The tract at residues 111–117 is complementarity-determining-3; sequence QQLNSYP.

Immunoglobulins are composed of two identical heavy chains and two identical light chains; disulfide-linked.

It is found in the secreted. It localises to the cell membrane. In terms of biological role, v region of the variable domain of immunoglobulin light chains that participates in the antigen recognition. Immunoglobulins, also known as antibodies, are membrane-bound or secreted glycoproteins produced by B lymphocytes. In the recognition phase of humoral immunity, the membrane-bound immunoglobulins serve as receptors which, upon binding of a specific antigen, trigger the clonal expansion and differentiation of B lymphocytes into immunoglobulins-secreting plasma cells. Secreted immunoglobulins mediate the effector phase of humoral immunity, which results in the elimination of bound antigens. The antigen binding site is formed by the variable domain of one heavy chain, together with that of its associated light chain. Thus, each immunoglobulin has two antigen binding sites with remarkable affinity for a particular antigen. The variable domains are assembled by a process called V-(D)-J rearrangement and can then be subjected to somatic hypermutations which, after exposure to antigen and selection, allow affinity maturation for a particular antigen. The sequence is that of Immunoglobulin kappa variable 1-9 from Homo sapiens (Human).